The chain runs to 746 residues: Disintegrin and metalloproteinase domain-containing protein 18 (746 aa).

An N-terminal signal peptide occupies residues 1-16 (MFFLLALLTELGRLQA). Positions 17–183 (HVGSEGIFLH…QKKNLSKLLP (167 aa)) are excised as a propeptide. Asparagine 36, asparagine 122, asparagine 149, asparagine 156, asparagine 177, and asparagine 294 each carry an N-linked (GlcNAc...) asparagine glycan. Topologically, residues 177 to 687 (NLSKLLPQYL…EKGYNAHWNN (511 aa)) are extracellular. The 198-residue stretch at 184 to 381 (QYLEIYIIVE…FEAKCLQKLS (198 aa)) folds into the Peptidase M12B domain. Cystine bridges form between cysteine 293–cysteine 376, cysteine 335–cysteine 360, cysteine 337–cysteine 342, and cysteine 450–cysteine 471. N-linked (GlcNAc...) asparagine glycosylation is found at asparagine 359, asparagine 465, asparagine 611, and asparagine 625. In terms of domain architecture, Disintegrin spans 390 to 479 (QPVCGNGILE…DCVPDTYALN (90 aa)). The region spanning 620–654 (TGYNCNTTTKCKGKGICNNFGNCQCFPGHKPPDCK) is the EGF-like domain. Cystine bridges form between cysteine 624/cysteine 636, cysteine 630/cysteine 642, and cysteine 644/cysteine 653. Residues 688–708 (WFILSFYIVLPFFIIFTIVIF) traverse the membrane as a helical segment. Residues 709-746 (KRNEIRKLCNRENTELIHPLYQKAMMWNINIAQNFRSK) are Cytoplasmic-facing.

In terms of processing, the prodomain and the metalloprotease-like domain are cleaved during the epididymal maturation of the spermatozoa. As to expression, expressed predominantly in adult and prepubertal testis.

Its subcellular location is the membrane. Sperm surface membrane protein that may be involved in spermatogenesis and fertilization. This is a non catalytic metalloprotease-like protein. The polypeptide is Disintegrin and metalloproteinase domain-containing protein 18 (ADAM18) (Macaca fascicularis (Crab-eating macaque)).